Reading from the N-terminus, the 281-residue chain is MNNLPVVRSPWRIVILLLGFTFLYAPMLMLVIYSFNSSKLVTVWAGWSTRWYGELLRDDAMMSAVGLSLTIAACAATAAAILGTIAAVVLVRFGRFRGSNGFAFMITAPLVMPDVITGLSLLLLFVALAHAIGWPADRGMLTIWLAHVTFCTAYVAVVISSRLRELDRSIEEAAMDLGATPLKVFFVITLPMIMPAIISGWLLAFTLSLDDLVIASFVSGPGATTLPMLVFSSVRMGVNPEINALATLILGAVGIVGFIAWYLMARAEKQRIRDIQRARRG.

Over 1 to 13 (MNNLPVVRSPWRI) the chain is Cytoplasmic. A helical transmembrane segment spans residues 14–33 (VILLLGFTFLYAPMLMLVIY). Residues 34–68 (SFNSSKLVTVWAGWSTRWYGELLRDDAMMSAVGLS) lie on the Periplasmic side of the membrane. Residues 65–260 (VGLSLTIAAC…GAVGIVGFIA (196 aa)) form the ABC transmembrane type-1 domain. Residues 69–88 (LTIAACAATAAAILGTIAAV) form a helical membrane-spanning segment. At 89–115 (VLVRFGRFRGSNGFAFMITAPLVMPDV) the chain is on the cytoplasmic side. The chain crosses the membrane as a helical span at residues 116–135 (ITGLSLLLLFVALAHAIGWP). Topologically, residues 136–140 (ADRGM) are periplasmic. A helical membrane pass occupies residues 141–160 (LTIWLAHVTFCTAYVAVVIS). Topologically, residues 161-186 (SRLRELDRSIEEAAMDLGATPLKVFF) are cytoplasmic. A helical membrane pass occupies residues 187–206 (VITLPMIMPAIISGWLLAFT). Over 207–243 (LSLDDLVIASFVSGPGATTLPMLVFSSVRMGVNPEIN) the chain is Periplasmic. The helical transmembrane segment at 244–263 (ALATLILGAVGIVGFIAWYL) threads the bilayer. The Cytoplasmic segment spans residues 264 to 281 (MARAEKQRIRDIQRARRG).

Belongs to the binding-protein-dependent transport system permease family. CysTW subfamily. The complex is composed of two ATP-binding proteins (PotG), two transmembrane proteins (PotH and PotI) and a solute-binding protein (PotF).

The protein localises to the cell inner membrane. Part of the ABC transporter complex PotFGHI involved in putrescine uptake. Responsible for the translocation of the substrate across the membrane. The protein is Putrescine transport system permease protein PotI of Escherichia coli O6:H1 (strain CFT073 / ATCC 700928 / UPEC).